The primary structure comprises 89 residues: Signal recognition particle 19 kDa protein (89 aa).

It belongs to the SRP19 family. In terms of assembly, part of the signal recognition particle protein translocation system, which is composed of SRP and FtsY. Archaeal SRP consists of a 7S RNA molecule of 300 nucleotides and two protein subunits: SRP54 and SRP19.

The protein resides in the cytoplasm. Functionally, involved in targeting and insertion of nascent membrane proteins into the cytoplasmic membrane. Binds directly to 7S RNA and mediates binding of the 54 kDa subunit of the SRP. The chain is Signal recognition particle 19 kDa protein from Methanococcus vannielii (strain ATCC 35089 / DSM 1224 / JCM 13029 / OCM 148 / SB).